Here is a 350-residue protein sequence, read N- to C-terminus: HTH-type DNA-binding transcriptional activator EutR (350 aa).

Residues 243 to 344 (SRAREYVLEN…AEKPSLTLHQ (102 aa)) enclose the HTH araC/xylS-type domain. DNA-binding regions (H-T-H motif) lie at residues 260-281 (LDLC…HAIL) and 311-334 (VKDA…QQLF).

It participates in amine and polyamine degradation; ethanolamine degradation. Functionally, activates the transcription of the eut operon, allowing utilization of ethanolamine (EA). Positively regulates its own transcription. Probably binds EA and vitamin B12 as effectors. Competes with ethanolamine ammonia-lysase (EAL, the first enzyme in the EA degradation pathway) for adenosylcobalamin. Ethanolamine-associated signaling mediated via this protein, but not EA degradation, impacts S.typhimurium survival within macrophages. Binds the promoter of ssrB and eutS in vitro; in mouse infection models binding to ssrB probably induces all 4 operons of pathogenicity island SPI-2. Expression of the eut operon allows this bacteria to use ethanolamine (EA) as a carbon, nitrogen and energy source. It relies on cobalamin (vitamin B12) both as a cofactor for the ethanolamine ammonia-lyase (EAL) activity and to induce the operon. EA enhances bacterial survival in macrophages in a concentration-dependent manner, suggesting it is an important nutrient in infection. The protein is HTH-type DNA-binding transcriptional activator EutR of Salmonella typhimurium (strain LT2 / SGSC1412 / ATCC 700720).